The following is a 574-amino-acid chain: Isocitrate dehydrogenase kinase/phosphatase (574 aa).

Residues 311 to 317 and lysine 332 each bind ATP; that span reads APGIRGM. Aspartate 367 is a catalytic residue.

The protein belongs to the AceK family.

The protein resides in the cytoplasm. It carries out the reaction L-seryl-[isocitrate dehydrogenase] + ATP = O-phospho-L-seryl-[isocitrate dehydrogenase] + ADP + H(+). Functionally, bifunctional enzyme which can phosphorylate or dephosphorylate isocitrate dehydrogenase (IDH) on a specific serine residue. This is a regulatory mechanism which enables bacteria to bypass the Krebs cycle via the glyoxylate shunt in response to the source of carbon. When bacteria are grown on glucose, IDH is fully active and unphosphorylated, but when grown on acetate or ethanol, the activity of IDH declines drastically concomitant with its phosphorylation. This is Isocitrate dehydrogenase kinase/phosphatase from Shigella boydii serotype 4 (strain Sb227).